A 338-amino-acid chain; its full sequence is Anthranilate phosphoribosyltransferase (338 aa).

5-phospho-alpha-D-ribose 1-diphosphate is bound by residues G78, 81–82, T86, 88–91, 106–114, and S118; these read GD, NIST, and KHGNRSVSS. G78 is a binding site for anthranilate. A Mg(2+)-binding site is contributed by S90. Anthranilate is bound at residue N109. Anthranilate is bound at residue R164. Residues D223 and E224 each contribute to the Mg(2+) site.

This sequence belongs to the anthranilate phosphoribosyltransferase family. Homodimer. The cofactor is Mg(2+).

The catalysed reaction is N-(5-phospho-beta-D-ribosyl)anthranilate + diphosphate = 5-phospho-alpha-D-ribose 1-diphosphate + anthranilate. The protein operates within amino-acid biosynthesis; L-tryptophan biosynthesis; L-tryptophan from chorismate: step 2/5. Functionally, catalyzes the transfer of the phosphoribosyl group of 5-phosphorylribose-1-pyrophosphate (PRPP) to anthranilate to yield N-(5'-phosphoribosyl)-anthranilate (PRA). The chain is Anthranilate phosphoribosyltransferase from Bacillus velezensis (strain DSM 23117 / BGSC 10A6 / LMG 26770 / FZB42) (Bacillus amyloliquefaciens subsp. plantarum).